A 517-amino-acid chain; its full sequence is Squalene epoxidase 6 (517 aa).

Transmembrane regions (helical) follow at residues 3–23 (FTHV…VFYL) and 45–65 (AADV…YALA). Residues 55 to 56 (VG), 75 to 76 (ER), Arg-83, Phe-88, Arg-156, Val-172, Asp-336, and Met-349 contribute to the FAD site. A helical transmembrane segment spans residues 447–467 (LVYHLCAITLSSIGQLLSPFP).

Belongs to the squalene monooxygenase family. Requires FAD as cofactor. In terms of tissue distribution, expressed in seedlings, leaves, stems, inflorescences and siliques.

The protein localises to the membrane. The catalysed reaction is squalene + reduced [NADPH--hemoprotein reductase] + O2 = (S)-2,3-epoxysqualene + oxidized [NADPH--hemoprotein reductase] + H2O + H(+). It participates in terpene metabolism; lanosterol biosynthesis; lanosterol from farnesyl diphosphate: step 2/3. In terms of biological role, catalyzes the stereospecific oxidation of squalene to (S)-2,3-epoxysqualene, and is considered to be a rate-limiting enzyme in steroid biosynthesis. The polypeptide is Squalene epoxidase 6 (SQE6) (Arabidopsis thaliana (Mouse-ear cress)).